Consider the following 64-residue polypeptide: Small ribosomal subunit protein bS21 (64 aa).

This sequence belongs to the bacterial ribosomal protein bS21 family.

The sequence is that of Small ribosomal subunit protein bS21 from Karelsulcia muelleri (strain GWSS) (Sulcia muelleri).